Here is a 414-residue protein sequence, read N- to C-terminus: CCA-adding enzyme (414 aa).

Gly8 and Arg11 together coordinate ATP. Residues Gly8 and Arg11 each contribute to the CTP site. The Mg(2+) site is built by Asp21 and Asp23. The ATP site is built by Arg92, Arg138, and Arg141. CTP-binding residues include Arg92, Arg138, and Arg141.

Belongs to the tRNA nucleotidyltransferase/poly(A) polymerase family. Bacterial CCA-adding enzyme type 2 subfamily. It depends on Mg(2+) as a cofactor.

It carries out the reaction a tRNA precursor + 2 CTP + ATP = a tRNA with a 3' CCA end + 3 diphosphate. The enzyme catalyses a tRNA with a 3' CCA end + 2 CTP + ATP = a tRNA with a 3' CCACCA end + 3 diphosphate. Its function is as follows. Catalyzes the addition and repair of the essential 3'-terminal CCA sequence in tRNAs without using a nucleic acid template. Adds these three nucleotides in the order of C, C, and A to the tRNA nucleotide-73, using CTP and ATP as substrates and producing inorganic pyrophosphate. tRNA 3'-terminal CCA addition is required both for tRNA processing and repair. Also involved in tRNA surveillance by mediating tandem CCA addition to generate a CCACCA at the 3' terminus of unstable tRNAs. While stable tRNAs receive only 3'-terminal CCA, unstable tRNAs are marked with CCACCA and rapidly degraded. This Buchnera aphidicola subsp. Cinara cedri (strain Cc) protein is CCA-adding enzyme.